A 389-amino-acid chain; its full sequence is MVGWAGNPSFDLFKLPEEHDEMRSAIRALAEKEIAPHAAEVDEKARFPEEALVALNSSGFNAVHIPEEYGGQGADSVATCIVIEEVARVDASASLIPAVNKLGTMGLILRGSEELKKQVLPALAAEGAMASYALSEREAGSDAASMRTRAKADGDHWILNGAKCWITNGGKSTWYTVMAVTDPDRGANGISAFMVHKDDEGFTVGPKERKLGIKGSPTTELYFENCRIPGDRIIGEPGTGFKTALATLDHTRPTIGAQAVGIAQGALDAAIAYTKDRKQFGESISTFQAVQFMLADMAMKVEAARLMVYSAAARAERGEPDLGFISAASKCFASDVAMEVTTDAVQLFGGAGYTTDFPVERFMRDAKITQIYEGTNQIQRVVMSRALLR.

It belongs to the acyl-CoA dehydrogenase family. It depends on FAD as a cofactor.

The catalysed reaction is a 2,3-saturated acyl-CoA + A = a 2,3-dehydroacyl-CoA + AH2. The chain is Probable acyl-CoA dehydrogenase fadE25 (fadE25) from Mycobacterium bovis (strain ATCC BAA-935 / AF2122/97).